The following is a 232-amino-acid chain: Small ribosomal subunit protein uS2 (232 aa).

It belongs to the universal ribosomal protein uS2 family.

The protein is Small ribosomal subunit protein uS2 of Baumannia cicadellinicola subsp. Homalodisca coagulata.